The following is a 188-amino-acid chain: Probable RNA 2'-phosphotransferase (188 aa).

The protein belongs to the KptA/TPT1 family.

Removes the 2'-phosphate from RNA via an intermediate in which the phosphate is ADP-ribosylated by NAD followed by a presumed transesterification to release the RNA and generate ADP-ribose 1''-2''-cyclic phosphate (APPR&gt;P). May function as an ADP-ribosylase. The polypeptide is Probable RNA 2'-phosphotransferase (Lacticaseibacillus paracasei (strain ATCC 334 / BCRC 17002 / CCUG 31169 / CIP 107868 / KCTC 3260 / NRRL B-441) (Lactobacillus paracasei)).